The sequence spans 117 residues: UPF0122 protein Teth514_1714 (117 aa).

The protein belongs to the UPF0122 family.

Might take part in the signal recognition particle (SRP) pathway. This is inferred from the conservation of its genetic proximity to ftsY/ffh. May be a regulatory protein. This Thermoanaerobacter sp. (strain X514) protein is UPF0122 protein Teth514_1714.